The following is a 481-amino-acid chain: Dual specificity protein kinase CLK4 (481 aa).

2 disordered regions span residues 1–46 and 102–143; these read MRHS…CKPH and SKSS…EDDE. Basic and acidic residues predominate over residues 8-24; sequence HCPDWDSRESWGHESYR. 2 stretches are compositionally biased toward basic residues: residues 25–34 and 106–136; these read GSHKRKRRSH and VRSRRSSPKRKRNRHCSSHQSRSKSHRRKRS. 2 positions are modified to phosphoserine: Ser136 and Ser138. Residues 159–475 enclose the Protein kinase domain; sequence YEIVDTLGEG…LDEALQHPFF (317 aa). Residues 165 to 173 and Lys189 each bind ATP; that span reads LGEGAFGKV. Residue Asp286 is the Proton acceptor of the active site.

The protein belongs to the protein kinase superfamily. CMGC Ser/Thr protein kinase family. Lammer subfamily. In terms of assembly, interacts with UBL5. Post-translationally, autophosphorylates on all three types of residues. In terms of tissue distribution, expressed in liver, kidney, heart, muscle, brain and endothelial cells.

It is found in the nucleus. It catalyses the reaction L-seryl-[protein] + ATP = O-phospho-L-seryl-[protein] + ADP + H(+). The enzyme catalyses L-threonyl-[protein] + ATP = O-phospho-L-threonyl-[protein] + ADP + H(+). It carries out the reaction L-tyrosyl-[protein] + ATP = O-phospho-L-tyrosyl-[protein] + ADP + H(+). With respect to regulation, TG003 inhibits its kinase activity and affects the regulation of alternative splicing mediated by phosphorylation of SR proteins. Its function is as follows. Dual specificity kinase acting on both serine/threonine and tyrosine-containing substrates. Phosphorylates serine- and arginine-rich (SR) proteins of the spliceosomal complex and may be a constituent of a network of regulatory mechanisms that enable SR proteins to control RNA splicing. Phosphorylates SRSF1 and SRSF3. Required for the regulation of alternative splicing of MAPT/TAU. Regulates the alternative splicing of tissue factor (F3) pre-mRNA in endothelial cells. The chain is Dual specificity protein kinase CLK4 (CLK4) from Homo sapiens (Human).